The chain runs to 229 residues: Cytidylate kinase (229 aa).

10–18 (GFSSCGKST) provides a ligand contact to ATP.

This sequence belongs to the cytidylate kinase family. Type 1 subfamily.

It localises to the cytoplasm. It catalyses the reaction CMP + ATP = CDP + ADP. The catalysed reaction is dCMP + ATP = dCDP + ADP. This Bacteroides thetaiotaomicron (strain ATCC 29148 / DSM 2079 / JCM 5827 / CCUG 10774 / NCTC 10582 / VPI-5482 / E50) protein is Cytidylate kinase.